The sequence spans 399 residues: Serine/threonine transporter SstT (399 aa).

9 helical membrane-spanning segments follow: residues 8 to 28 (LSLV…AFLF), 37 to 57 (IFGE…VFVL), 77 to 97 (ILFL…IADL), 134 to 154 (PVVA…IILG), 178 to 198 (VIHL…AVTF), 212 to 232 (LLLV…PIMV), 284 to 304 (VIIP…ITVL), 312 to 332 (LGIS…SISA), and 348 to 370 (VACS…GMVI).

This sequence belongs to the dicarboxylate/amino acid:cation symporter (DAACS) (TC 2.A.23) family.

The protein resides in the cell inner membrane. The enzyme catalyses L-serine(in) + Na(+)(in) = L-serine(out) + Na(+)(out). The catalysed reaction is L-threonine(in) + Na(+)(in) = L-threonine(out) + Na(+)(out). Functionally, involved in the import of serine and threonine into the cell, with the concomitant import of sodium (symport system). The chain is Serine/threonine transporter SstT from Acinetobacter baylyi (strain ATCC 33305 / BD413 / ADP1).